The chain runs to 294 residues: Homoserine kinase (294 aa).

83 to 93 (PLARGLGSSAS) lines the ATP pocket.

It belongs to the GHMP kinase family. Homoserine kinase subfamily.

The protein resides in the cytoplasm. It carries out the reaction L-homoserine + ATP = O-phospho-L-homoserine + ADP + H(+). It participates in amino-acid biosynthesis; L-threonine biosynthesis; L-threonine from L-aspartate: step 4/5. In terms of biological role, catalyzes the ATP-dependent phosphorylation of L-homoserine to L-homoserine phosphate. This Oceanobacillus iheyensis (strain DSM 14371 / CIP 107618 / JCM 11309 / KCTC 3954 / HTE831) protein is Homoserine kinase.